Consider the following 535-residue polypeptide: cAMP-regulated D2 protein (535 aa).

An N-terminal signal peptide occupies residues 1 to 20 (MNKLLVFILLLLLLINISFA). The cysteines at positions 89 and 109 are disulfide-linked. Ser213 (acyl-ester intermediate) is an active-site residue. A disulfide bridge links Cys265 with Cys272. Catalysis depends on charge relay system residues Glu338 and His440. Asn500 carries N-linked (GlcNAc...) asparagine glycosylation.

The protein belongs to the type-B carboxylesterase/lipase family.

It localises to the cytoplasmic vesicle. It is found in the esterosome membrane. This Dictyostelium discoideum (Social amoeba) protein is cAMP-regulated D2 protein (D2).